The chain runs to 439 residues: Ribosomal protein uS12 methylthiotransferase RimO (439 aa).

The MTTase N-terminal domain maps to 2 to 114 (SKLYLMSLGC…IDEMILKKTN (113 aa)). [4Fe-4S] cluster is bound by residues Cys11, Cys45, Cys77, Cys146, Cys150, and Cys153. In terms of domain architecture, Radical SAM core spans 132–363 (TGSNSHAFIK…VDEVIEKSFE (232 aa)).

It belongs to the methylthiotransferase family. RimO subfamily. Requires [4Fe-4S] cluster as cofactor.

It localises to the cytoplasm. The enzyme catalyses L-aspartate(89)-[ribosomal protein uS12]-hydrogen + (sulfur carrier)-SH + AH2 + 2 S-adenosyl-L-methionine = 3-methylsulfanyl-L-aspartate(89)-[ribosomal protein uS12]-hydrogen + (sulfur carrier)-H + 5'-deoxyadenosine + L-methionine + A + S-adenosyl-L-homocysteine + 2 H(+). Its function is as follows. Catalyzes the methylthiolation of an aspartic acid residue of ribosomal protein uS12. The sequence is that of Ribosomal protein uS12 methylthiotransferase RimO from Campylobacter jejuni subsp. jejuni serotype O:23/36 (strain 81-176).